The chain runs to 65 residues: MAKSKGARIVITLECSDKAGEFAQKRKPGVFRYTTTKNRRNTPSRIELNKFCPNCNQHCIFKEIK.

Belongs to the bacterial ribosomal protein bL33 family.

The protein resides in the plastid. It is found in the chloroplast. The polypeptide is Large ribosomal subunit protein bL33c (Pyropia yezoensis (Susabi-nori)).